We begin with the raw amino-acid sequence, 227 residues long: Testis expressed protein 56 (227 aa).

In terms of tissue distribution, expressed predominantly in the testis.

The sequence is that of Testis expressed protein 56 from Mus musculus (Mouse).